Reading from the N-terminus, the 145-residue chain is Large ribosomal subunit protein bL19 (145 aa).

Positions 114–136 (IAEKMESPAAKATREAAKKEAKA) are enriched in basic and acidic residues. Residues 114 to 145 (IAEKMESPAAKATREAAKKEAKAAKKNAAPAE) form a disordered region.

It belongs to the bacterial ribosomal protein bL19 family.

Its function is as follows. This protein is located at the 30S-50S ribosomal subunit interface and may play a role in the structure and function of the aminoacyl-tRNA binding site. This is Large ribosomal subunit protein bL19 from Methylocella silvestris (strain DSM 15510 / CIP 108128 / LMG 27833 / NCIMB 13906 / BL2).